A 138-amino-acid chain; its full sequence is ATP synthase epsilon chain 1 (138 aa).

This sequence belongs to the ATPase epsilon chain family. In terms of assembly, F-type ATPases have 2 components, CF(1) - the catalytic core - and CF(0) - the membrane proton channel. CF(1) has five subunits: alpha(3), beta(3), gamma(1), delta(1), epsilon(1). CF(0) has three main subunits: a, b and c.

The protein localises to the cell inner membrane. Functionally, produces ATP from ADP in the presence of a proton gradient across the membrane. The sequence is that of ATP synthase epsilon chain 1 from Syntrophotalea carbinolica (strain DSM 2380 / NBRC 103641 / GraBd1) (Pelobacter carbinolicus).